Here is a 359-residue protein sequence, read N- to C-terminus: Peptide chain release factor 1 (359 aa).

At glutamine 236 the chain carries N5-methylglutamine. The tract at residues 288-308 is disordered; it reads QDEQDAERKSTIGTGDRSERI. Residues 293 to 308 are compositionally biased toward basic and acidic residues; the sequence is AERKSTIGTGDRSERI.

Belongs to the prokaryotic/mitochondrial release factor family. Post-translationally, methylated by PrmC. Methylation increases the termination efficiency of RF1.

The protein localises to the cytoplasm. Its function is as follows. Peptide chain release factor 1 directs the termination of translation in response to the peptide chain termination codons UAG and UAA. The polypeptide is Peptide chain release factor 1 (Streptococcus uberis (strain ATCC BAA-854 / 0140J)).